A 447-amino-acid chain; its full sequence is Argininosuccinate synthase (447 aa).

Residues 17–25 (AFSGGLDTS) and Ala-43 contribute to the ATP site. Position 99 (Tyr-99) interacts with L-citrulline. ATP is bound by residues Gly-129 and Thr-131. Residues Thr-131, Asn-135, and Asp-136 each coordinate L-aspartate. Position 135 (Asn-135) interacts with L-citrulline. Asp-136 provides a ligand contact to ATP. L-citrulline contacts are provided by Arg-139 and Ser-192. Asp-194 serves as a coordination point for ATP. L-citrulline-binding residues include Thr-201, Glu-203, and Glu-280.

Belongs to the argininosuccinate synthase family. Type 2 subfamily. In terms of assembly, homotetramer.

It localises to the cytoplasm. The catalysed reaction is L-citrulline + L-aspartate + ATP = 2-(N(omega)-L-arginino)succinate + AMP + diphosphate + H(+). It functions in the pathway amino-acid biosynthesis; L-arginine biosynthesis; L-arginine from L-ornithine and carbamoyl phosphate: step 2/3. The protein is Argininosuccinate synthase of Escherichia coli (strain K12 / MC4100 / BW2952).